Here is a 195-residue protein sequence, read N- to C-terminus: Protein lin-28 homolog A (195 aa).

Residues 33–106 (QGSGVCKWFN…GLESTRVTGP (74 aa)) form the CSD domain. Positions 98–126 (LESTRVTGPGGAPCIGSERRPKVKGQQKR) are disordered. The tract at residues 107 to 130 (GGAPCIGSERRPKVKGQQKRRQKG) is flexible linker. 2 CCHC-type zinc fingers span residues 131–148 (DRCY…ECKL) and 153–170 (KKCH…QCPA). The Zn(2+) site is built by cysteine 133, cysteine 136, histidine 141, cysteine 146, cysteine 155, cysteine 158, histidine 163, and cysteine 168. Positions 175-195 (AANLEEQPISEEQELIPETME) are disordered. The span at 182–195 (PISEEQELIPETME) shows a compositional bias: acidic residues.

The protein belongs to the lin-28 family. Monomer.

Its subcellular location is the cytoplasm. The protein localises to the rough endoplasmic reticulum. The protein resides in the P-body. It localises to the stress granule. It is found in the nucleus. Its subcellular location is the nucleolus. In terms of biological role, RNA-binding protein that inhibits processing of pre-let-7 miRNAs and regulates translation of mRNAs that control developmental timing, pluripotency and metabolism. Seems to recognize a common structural G-quartet (G4) feature in its miRNA and mRNA targets. 'Translational enhancer' that drives specific mRNAs to polysomes and increases the efficiency of protein synthesis. Its association with the translational machinery and target mRNAs results in an increased number of initiation events per molecule of mRNA and, indirectly, in mRNA stabilization. Suppressor of microRNA (miRNA) biogenesis, including that of let-7. Binds specific target miRNA precursors (pre-miRNAs), recognizing an 5'-GGAG-3' motif found in their terminal loop, and recruits uridylyltransferase. This results in the terminal uridylation of target pre-miRNAs. Uridylated pre-miRNAs fail to be processed by Dicer and undergo degradation. Localized to the periendoplasmic reticulum area, binds to a large number of spliced mRNAs and inhibits the translation of mRNAs destined for the ER, reducing the synthesis of transmembrane proteins, ER or Golgi lumen proteins, and secretory proteins. Binds to and enhances the translation of mRNAs for several metabolic enzymes, increasing glycolysis and oxidative phosphorylation. Which, with the let-7 repression may enhance tissue repair in adult tissue. The protein is Protein lin-28 homolog A (lin28a) of Xenopus tropicalis (Western clawed frog).